We begin with the raw amino-acid sequence, 462 residues long: Cysteine--tRNA ligase (462 aa).

Cysteine 29 contacts Zn(2+). The 'HIGH' region signature appears at 31-41 (PTVYDHAHIGN). Positions 214, 239, and 243 each coordinate Zn(2+). Positions 272–276 (KMSKS) match the 'KMSKS' region motif. Lysine 275 serves as a coordination point for ATP.

This sequence belongs to the class-I aminoacyl-tRNA synthetase family. Monomer. The cofactor is Zn(2+).

It localises to the cytoplasm. It catalyses the reaction tRNA(Cys) + L-cysteine + ATP = L-cysteinyl-tRNA(Cys) + AMP + diphosphate. This Xanthobacter autotrophicus (strain ATCC BAA-1158 / Py2) protein is Cysteine--tRNA ligase.